A 572-amino-acid polypeptide reads, in one-letter code: Proline--tRNA ligase (572 aa).

Belongs to the class-II aminoacyl-tRNA synthetase family. ProS type 1 subfamily. In terms of assembly, homodimer.

It is found in the cytoplasm. It carries out the reaction tRNA(Pro) + L-proline + ATP = L-prolyl-tRNA(Pro) + AMP + diphosphate. In terms of biological role, catalyzes the attachment of proline to tRNA(Pro) in a two-step reaction: proline is first activated by ATP to form Pro-AMP and then transferred to the acceptor end of tRNA(Pro). As ProRS can inadvertently accommodate and process non-cognate amino acids such as alanine and cysteine, to avoid such errors it has two additional distinct editing activities against alanine. One activity is designated as 'pretransfer' editing and involves the tRNA(Pro)-independent hydrolysis of activated Ala-AMP. The other activity is designated 'posttransfer' editing and involves deacylation of mischarged Ala-tRNA(Pro). The misacylated Cys-tRNA(Pro) is not edited by ProRS. The sequence is that of Proline--tRNA ligase from Salmonella dublin (strain CT_02021853).